A 215-amino-acid polypeptide reads, in one-letter code: 3-isopropylmalate dehydratase small subunit (215 aa).

The protein belongs to the LeuD family. LeuD type 1 subfamily. As to quaternary structure, heterodimer of LeuC and LeuD.

It catalyses the reaction (2R,3S)-3-isopropylmalate = (2S)-2-isopropylmalate. The protein operates within amino-acid biosynthesis; L-leucine biosynthesis; L-leucine from 3-methyl-2-oxobutanoate: step 2/4. Functionally, catalyzes the isomerization between 2-isopropylmalate and 3-isopropylmalate, via the formation of 2-isopropylmaleate. In Saccharophagus degradans (strain 2-40 / ATCC 43961 / DSM 17024), this protein is 3-isopropylmalate dehydratase small subunit.